Reading from the N-terminus, the 290-residue chain is Phosphate import ATP-binding protein PstB (290 aa).

Residues 43–285 (MSVRNLNVYY…PEHELTEAYI (243 aa)) enclose the ABC transporter domain. Position 75-82 (75-82 (GPSGCGKS)) interacts with ATP.

Belongs to the ABC transporter superfamily. Phosphate importer (TC 3.A.1.7) family. The complex is composed of two ATP-binding proteins (PstB), two transmembrane proteins (PstC and PstA) and a solute-binding protein (PstS).

It is found in the cell inner membrane. The enzyme catalyses phosphate(out) + ATP + H2O = ADP + 2 phosphate(in) + H(+). Its function is as follows. Part of the ABC transporter complex PstSACB involved in phosphate import. Responsible for energy coupling to the transport system. The sequence is that of Phosphate import ATP-binding protein PstB from Pseudoalteromonas atlantica (strain T6c / ATCC BAA-1087).